The primary structure comprises 161 residues: PRS fimbrial major pilin protein (161 aa).

The protein belongs to the fimbrial protein family.

The protein resides in the secreted. It is found in the fimbrium. Fimbriae (also called pili), polar filaments radiating from the surface of the bacterium to a length of 0.5-1.5 micrometers and numbering 100-300 per cell, enable bacteria to colonize the epithelium of specific host organs. The polypeptide is PRS fimbrial major pilin protein (prsA) (Escherichia coli).